Here is an 80-residue protein sequence, read N- to C-terminus: Exodeoxyribonuclease 7 small subunit (80 aa).

A disordered region spans residues 60–80 (LIDSDGTEHNLDPNNASAPEE). The segment covering 61 to 70 (IDSDGTEHNL) has biased composition (basic and acidic residues). Over residues 71–80 (DPNNASAPEE) the composition is skewed to polar residues.

Belongs to the XseB family. Heterooligomer composed of large and small subunits.

It localises to the cytoplasm. It catalyses the reaction Exonucleolytic cleavage in either 5'- to 3'- or 3'- to 5'-direction to yield nucleoside 5'-phosphates.. Bidirectionally degrades single-stranded DNA into large acid-insoluble oligonucleotides, which are then degraded further into small acid-soluble oligonucleotides. The polypeptide is Exodeoxyribonuclease 7 small subunit (Lactobacillus acidophilus (strain ATCC 700396 / NCK56 / N2 / NCFM)).